Here is a 541-residue protein sequence, read N- to C-terminus: MFSLQELCRKNIYILPYSLGKHVLQHLGLYWEKHGSLQRIGDDYVLLQQDLIFSVNEALRMAAEEGNNEVVKLLLLWEGNLHYAIIGALEGNRYDLIHKYYDQIGDCHKILPLIQDPQIFEKCHELSTSCNIRCLLEHAVKHNMLSILQKHKDQIRLHLALIQVLFELACREHKNDIVRWIGYSLYIHHLETIFDVALLHKNLSLYVLGYELLMHKVNTEAANIDVSDLLTQHLRSAAAGGLLHFMLETLKYGGCVDKTVLFAAISYKHRKIVAHFIHQVPRKTVEELLLHAVQTRAPKKTLNLLLSSLNYSVHTIIKQLVRSVAIYRSTLVVKLLLMRRKKKLNLIDAVLARLVKYCTYTDIVKFIREFSVSPERVIKMAARESRTFLIEMISKAAWRNDPQTMIHHLKQLTYTMKPESGKDLLIYMIHYIYQTSNLLVAEEEKNIFKLATFYAKHNSVNRFKQICEDYYALDVDARFKTLILECFEIAVQKNYPRIASIVDDFIRFLFYKGDITKEEISEAYSLKNAELYVDLKWLQQE.

It belongs to the asfivirus MGF 505 family.

Plays a role in virus cell tropism, and may be required for efficient virus replication in macrophages. This Ornithodoros (relapsing fever ticks) protein is Protein MGF 505-10R.